The following is a 1025-amino-acid chain: Multidrug resistance protein MdtC (1025 aa).

A run of 12 helical transmembrane segments spans residues 15–35 (ILIS…LPVA), 333–353 (EVEQ…FLFL), 360–380 (LIPA…MYLC), 387–407 (LSLM…IVVL), 431–451 (VGFT…PLLL), 469–489 (VAIG…CGWL), 528–548 (LTGL…ISIP), 851–871 (AQVI…GMLY), 875–895 (VHPL…LLAL), 897–917 (IFDA…IGIV), 953–973 (PIMM…LSGG), and 984–1004 (ITIV…TPVV).

It belongs to the resistance-nodulation-cell division (RND) (TC 2.A.6) family. MdtC subfamily. As to quaternary structure, part of a tripartite efflux system composed of MdtA, MdtB and MdtC. MdtC forms a heteromultimer with MdtB.

The protein resides in the cell inner membrane. In Klebsiella pneumoniae (strain 342), this protein is Multidrug resistance protein MdtC.